A 358-amino-acid chain; its full sequence is UPF0324 membrane protein CT0845 (358 aa).

The next 10 helical transmembrane spans lie at 36-53 (YFPGVLASITVAAAATFL), 57-76 (YGAPTMLFALLIGMAFRFLS), 83-105 (LVGIQFASTTVLRIGVALLGMRI), 115-134 (VKPVVMVFFSVLLTILFGLA), 146-168 (GVLTGGSVGICGASAALAIAAVL), 178-200 (TIFTVISITALSTLAMIAYPVVA), 244-261 (LLRVSMLVPVVFILSLIF), 276-295 (LLPPFIIFFVLFVGINSLGV), 307-325 (VSRWCLVTAIGALGMKTSL), and 335-357 (PVSIMIAETVFLAVLVLGSVVWM).

Belongs to the UPF0324 family.

Its subcellular location is the cell membrane. This chain is UPF0324 membrane protein CT0845, found in Chlorobaculum tepidum (strain ATCC 49652 / DSM 12025 / NBRC 103806 / TLS) (Chlorobium tepidum).